Consider the following 916-residue polypeptide: Translation initiation factor IF-2 (916 aa).

The tract at residues 58 to 317 (LEAEGHLPGA…GVTVPRGDGG (260 aa)) is disordered. Residues 120–142 (EKVAASEAADAKPAAGAPADTAK) show a composition bias toward low complexity. The span at 195-206 (SNIPRPAPPRPG) shows a compositional bias: pro residues. Composition is skewed to gly residues over residues 214 to 227 (RPGGGQRQGGGGRP) and 235 to 282 (SAGG…GRGG). Residues 283–294 (GKSKARKSKRAK) are compositionally biased toward basic residues. One can recognise a tr-type G domain in the interval 409 to 583 (IRPPVVTVMG…LTADAGLDLR (175 aa)). The interval 418-425 (GHVDHGKT) is G1. A GTP-binding site is contributed by 418 to 425 (GHVDHGKT). Residues 443 to 447 (GITQH) form a G2 region. A G3 region spans residues 468 to 471 (DTPG). Residues 468 to 472 (DTPGH) and 522 to 525 (NKVD) contribute to the GTP site. The G4 stretch occupies residues 522–525 (NKVD). Residues 558 to 560 (SAR) form a G5 region.

It belongs to the TRAFAC class translation factor GTPase superfamily. Classic translation factor GTPase family. IF-2 subfamily.

Its subcellular location is the cytoplasm. Functionally, one of the essential components for the initiation of protein synthesis. Protects formylmethionyl-tRNA from spontaneous hydrolysis and promotes its binding to the 30S ribosomal subunits. Also involved in the hydrolysis of GTP during the formation of the 70S ribosomal complex. The polypeptide is Translation initiation factor IF-2 (Leifsonia xyli subsp. xyli (strain CTCB07)).